A 671-amino-acid polypeptide reads, in one-letter code: DEAD-box ATP-dependent RNA helicase 7 (671 aa).

The disordered stretch occupies residues 1–84; sequence MPSLMLSDKK…EKKKSSKKVK (84 aa). Residues 26–41 show a composition bias toward basic and acidic residues; the sequence is LDSKKGKKEQKLKLSD. 2 positions are modified to phosphoserine: Ser-40 and Ser-42. The segment covering 50 to 60 has biased composition (basic residues); sequence KKSKKKDKKRK. The Q motif motif lies at 96–124; sequence NAVSKFRISAPLREKLKANGIEALFPIQA. One can recognise a Helicase ATP-binding domain in the interval 127–309; the sequence is FDMVLDGADL…NRFLKRDQKT (183 aa). Position 140–147 (140–147) interacts with ATP; the sequence is ARTGQGKT. Positions 255-258 match the DEAD box motif; it reads DEAD. The 141-residue stretch at 339–479 folds into the Helicase C-terminal domain; sequence LIPDIISCYS…HLAAPQPDEI (141 aa). Residues 627 to 671 form a disordered region; sequence EREPLPQKRFGGGGRGNRFGGGGGNRFGGGGGRGRGGSGGRGQRY. The segment covering 636 to 671 has biased composition (gly residues); the sequence is FGGGGRGNRFGGGGGNRFGGGGGRGRGGSGGRGQRY.

This sequence belongs to the DEAD box helicase family. DDX21/DDX50 subfamily.

Its subcellular location is the nucleus. It catalyses the reaction ATP + H2O = ADP + phosphate + H(+). The sequence is that of DEAD-box ATP-dependent RNA helicase 7 (RH7) from Arabidopsis thaliana (Mouse-ear cress).